The primary structure comprises 149 residues: MRAVVQRVKEASVTVAGDIKGKIDKGLLVFVGIGEGDTEEDVRYLVDKIVNLRIFEDDTHKMNLSALDLNREILAVSQFTLYGDCRKGRRPNFTGAAKPRYAEKMYDTFVKFLKNTGLKVEEGVFQAMMEVNLINDGPVTILLDSNKQF.

A Gly-cisPro motif, important for rejection of L-amino acids motif is present at residues 137–138; sequence GP.

The protein belongs to the DTD family. Homodimer.

It is found in the cytoplasm. The catalysed reaction is glycyl-tRNA(Ala) + H2O = tRNA(Ala) + glycine + H(+). It catalyses the reaction a D-aminoacyl-tRNA + H2O = a tRNA + a D-alpha-amino acid + H(+). Its function is as follows. An aminoacyl-tRNA editing enzyme that deacylates mischarged D-aminoacyl-tRNAs. Also deacylates mischarged glycyl-tRNA(Ala), protecting cells against glycine mischarging by AlaRS. Acts via tRNA-based rather than protein-based catalysis; rejects L-amino acids rather than detecting D-amino acids in the active site. By recycling D-aminoacyl-tRNA to D-amino acids and free tRNA molecules, this enzyme counteracts the toxicity associated with the formation of D-aminoacyl-tRNA entities in vivo and helps enforce protein L-homochirality. This chain is D-aminoacyl-tRNA deacylase, found in Halothermothrix orenii (strain H 168 / OCM 544 / DSM 9562).